Reading from the N-terminus, the 89-residue chain is Elongation factor 1-beta (89 aa).

It belongs to the EF-1-beta/EF-1-delta family.

Its function is as follows. Promotes the exchange of GDP for GTP in EF-1-alpha/GDP, thus allowing the regeneration of EF-1-alpha/GTP that could then be used to form the ternary complex EF-1-alpha/GTP/AAtRNA. This is Elongation factor 1-beta from Methanococcus aeolicus (strain ATCC BAA-1280 / DSM 17508 / OCM 812 / Nankai-3).